The chain runs to 158 residues: Large ribosomal subunit protein uL23 (158 aa).

The disordered stretch occupies residues 1–43 (MPPKSSTKAEPKASSAKTQVAKAKSAKKAVVKGTSSKTQRRIR). Residues 12-23 (KASSAKTQVAKA) show a composition bias toward low complexity.

It belongs to the universal ribosomal protein uL23 family.

Its function is as follows. This protein binds to a specific region on the 26S rRNA. The polypeptide is Large ribosomal subunit protein uL23 (Puccinia graminis (Black stem rust fungus)).